A 256-amino-acid polypeptide reads, in one-letter code: Protein FixA (256 aa).

Belongs to the ETF beta-subunit/FixA family. In terms of assembly, heterodimer of FixA and FixB.

The protein operates within amine and polyamine metabolism; carnitine metabolism. Required for anaerobic carnitine reduction. May bring reductant to CaiA. This chain is Protein FixA, found in Salmonella dublin (strain CT_02021853).